The sequence spans 428 residues: Enolase (428 aa).

Q163 contributes to the (2R)-2-phosphoglycerate binding site. E205 serves as the catalytic Proton donor. Mg(2+)-binding residues include D242, E286, and D313. The (2R)-2-phosphoglycerate site is built by K338, R367, S368, and K389. The active-site Proton acceptor is K338.

Belongs to the enolase family. The cofactor is Mg(2+).

The protein resides in the cytoplasm. It is found in the secreted. The protein localises to the cell surface. The enzyme catalyses (2R)-2-phosphoglycerate = phosphoenolpyruvate + H2O. Its pathway is carbohydrate degradation; glycolysis; pyruvate from D-glyceraldehyde 3-phosphate: step 4/5. Catalyzes the reversible conversion of 2-phosphoglycerate (2-PG) into phosphoenolpyruvate (PEP). It is essential for the degradation of carbohydrates via glycolysis. In Acidovorax ebreus (strain TPSY) (Diaphorobacter sp. (strain TPSY)), this protein is Enolase.